We begin with the raw amino-acid sequence, 119 residues long: Large ribosomal subunit protein bL20 (119 aa).

Belongs to the bacterial ribosomal protein bL20 family.

Binds directly to 23S ribosomal RNA and is necessary for the in vitro assembly process of the 50S ribosomal subunit. It is not involved in the protein synthesizing functions of that subunit. The chain is Large ribosomal subunit protein bL20 from Methylocella silvestris (strain DSM 15510 / CIP 108128 / LMG 27833 / NCIMB 13906 / BL2).